The following is a 43-amino-acid chain: Protein PsbN (43 aa).

A helical transmembrane segment spans residues 5–27 (TFITIFISCLLVSVTGYALYTAF).

The protein belongs to the PsbN family.

It is found in the plastid. Its subcellular location is the chloroplast thylakoid membrane. May play a role in photosystem I and II biogenesis. The polypeptide is Protein PsbN (Chara vulgaris (Common stonewort)).